The chain runs to 427 residues: ATP-dependent RNA helicase DDX39A (427 aa).

A compositionally biased stretch (acidic residues) spans 1 to 19; that stretch reads MAEQDVENDLLDYDEEEEP. A disordered region spans residues 1–34; it reads MAEQDVENDLLDYDEEEEPQAPQESTPAPPKKDI. Ala2 bears the N-acetylalanine mark. Residue Lys31 forms a Glycyl lysine isopeptide (Lys-Gly) (interchain with G-Cter in SUMO2) linkage. Position 35 is an N6-acetyllysine; alternate (Lys35). Lys35 is covalently cross-linked (Glycyl lysine isopeptide (Lys-Gly) (interchain with G-Cter in SUMO2); alternate). Ser37 bears the Phosphoserine mark. Positions 44-72 match the Q motif motif; it reads SGFRDFLLKPELLRAIVDCGFEHPSEVQH. The Helicase ATP-binding domain occupies 75 to 248; it reads IPQAILGMDV…RKFMQDPMEV (174 aa). 88–95 provides a ligand contact to ATP; it reads AKSGMGKT. Residues Lys154 and Lys162 each participate in a glycyl lysine isopeptide (Lys-Gly) (interchain with G-Cter in SUMO2) cross-link. Thr171 is modified (phosphothreonine). The short motif at 195 to 198 is the DECD box element; sequence DECD. Residues Lys240 and Lys255 each participate in a glycyl lysine isopeptide (Lys-Gly) (interchain with G-Cter in SUMO2) cross-link. The Helicase C-terminal domain maps to 260–421; it reads GLQQYYVKLK…ELPEEIDIST (162 aa). Ser426 carries the post-translational modification Phosphoserine.

This sequence belongs to the DEAD box helicase family. DECD subfamily. As to quaternary structure, binds ALYREF/THOC4 and DDX39B/BAT1. Interacts with the apo-AREX complex component SARNP. Interacts with MX1. Interacts with MCM3AP isoform GANP. Interacts with ECD. Interacts with PHAX; this interaction stimulates PHAX RNA binding activity. In terms of assembly, (Microbial infection) Interacts with human cytomegalovirus/HHV-5 protein UL69. SUMOylated by RANBP2; SUMOylation modification affects its ability to bind RNA. In terms of tissue distribution, detected in testis, and at lower levels in brain, kidney, lung, thymus, spleen and salivary gland.

The protein localises to the nucleus. It localises to the cytoplasm. It catalyses the reaction ATP + H2O = ADP + phosphate + H(+). Its function is as follows. Helicase that plays an essential role in mRNA export and is involved in multiple steps in RNA metabolism including alternative splicing. Regulates nuclear mRNA export to the cytoplasm through association with ECD. Also involved in spliceosomal uridine-rich small nuclear RNA (U snRNA) export by stimulating the RNA binding of adapter PHAX. Plays a role in the negative regulation of type I IFN production by increasing the nuclear retention of antiviral transcripts and thus reducing their protein expression. Independently of the interferon pathway, plays an antiviral role against alphaviruses by binding to a 5' conserved sequence element in the viral genomic RNA. This chain is ATP-dependent RNA helicase DDX39A (DDX39A), found in Homo sapiens (Human).